The sequence spans 2813 residues: von Willebrand factor (2813 aa).

A signal peptide spans 1-22 (MSPTRLVRVLLALALILPGKLC). The propeptide occupies 23-763 (TKGTVGRSSM…SSPRSHRSKR (741 aa)). Residues 33–201 (ARCSLFGGDF…ALSSGEQRCK (169 aa)) enclose the VWFD 1 domain. Intrachain disulfides connect C35/C162 and C57/C200. N-linked (GlcNAc...) asparagine glycans are attached at residues N99, N156, and N211. The TIL 1 domain maps to 295–348 (CPAGMEYKECVSPCTRTCQSLHVKEVCQEQCVDGCSCPEGQLLDEGHCVGSAEC). The region spanning 386 to 560 (GECLVTGQSH…NAWKLLGACE (175 aa)) is the VWFD 2 domain. 3 cysteine pairs are disulfide-bonded: C388-C524, C410-C559, and C432-C440. A Cell attachment site motif is present at residues 531–533 (RGD). 2 consecutive TIL domains span residues 652–707 (CPQG…KAQC) and 776–827 (CPAD…LERC). The N-linked (GlcNAc...) asparagine glycan is linked to N666. A Cell attachment site motif is present at residues 698–700 (RGD). Residues 764–787 (SLSCRPPMVKLVCPADNPRAEGLE) are amino-terminal. 3 disulfides stabilise this stretch: C767–C808, C776–C804, and C810–C821. Residues 788–833 (CAKTCQNYDLQCMSTGCVSGCLCPQGMVRHENRCVALERCPCFHQG) form an E1 region. The tract at residues 826–853 (RCPCFHQGQEYAPGETVKIDCNTCVCRD) is CX. N-linked (GlcNAc...) asparagine glycosylation occurs at N857. A VWFD 3 domain is found at 865 to 1032 (ATCSAIGMAH…NSWKVNPQCA (168 aa)). 11 cysteine pairs are disulfide-bonded: C867-C996, C889-C1031, C898-C993, C914-C921, C1060-C1084, C1071-C1111, C1089-C1091, C1126-C1130, C1149-C1169, C1153-C1165, and C1196-C1199. The TIL 4 domain maps to 1146-1196 (YNSCAPACPITCQHPEPLACPVQCVEGCHAHCPPGKILDELLQTCIDPEDC). An N-linked (GlcNAc...) asparagine glycan is attached at N1231. 2 cysteine pairs are disulfide-bonded: C1234/C1237 and C1272/C1458. 2 VWFA domains span residues 1277–1453 (DLVF…RDEI) and 1498–1665 (DVVF…PDLV). N-linked (GlcNAc...) asparagine glycosylation is found at N1515 and N1574. 8 cysteine pairs are disulfide-bonded: C1669/C1670, C1686/C1872, C1879/C1904, C1899/C1940, C1927/C2088, C1950/C2085, C1972/C2123, and C1993/C2001. A VWFA 3 domain is found at 1691–1871 (DVVLLLDGSS…TLGNSFFHKL (181 aa)). One can recognise a VWFD 4 domain in the interval 1948–2124 (CVCMGSSTRH…TVQQLGKTCQ (177 aa)). Positions 2216–2261 (CPRLCEGNTSSCGDQPSEGCFCPPNQVMLEGSCVPEEACTQCISED) are E2. N2223, N2290, N2357, and N2400 each carry an N-linked (GlcNAc...) asparagine glycan. The VWFC 1 domain occupies 2255–2328 (TQCISEDGVR…CCPEYECVCD (74 aa)). One can recognise a VWFC 2 domain in the interval 2429-2495 (KVCVHRGTIY…HEGECCGRCL (67 aa)). The Cell attachment site motif lies at 2507–2509 (RGD). 2 N-linked (GlcNAc...) asparagine glycosylation sites follow: N2546 and N2585. Residues 2580-2645 (EACLLNGTII…NQGECCGRCL (66 aa)) form the VWFC 3 domain. Intrachain disulfides connect C2724-C2774, C2739-C2788, C2750-C2804, and C2754-C2806. The CTCK domain occupies 2724–2812 (CKDIIAKLQR…QCRCSPRKCS (89 aa)). N2790 carries N-linked (GlcNAc...) asparagine glycosylation.

As to quaternary structure, multimeric. Interacts with F8. Post-translationally, all cysteine residues are involved in intrachain or interchain disulfide bonds. In terms of processing, N- and O-glycosylated. In terms of tissue distribution, plasma.

It localises to the secreted. Its subcellular location is the extracellular space. The protein resides in the extracellular matrix. Important in the maintenance of hemostasis, it promotes adhesion of platelets to the sites of vascular injury by forming a molecular bridge between sub-endothelial collagen matrix and platelet-surface receptor complex, glycoprotein Ibalpha/IX/V. Also acts as a chaperone for coagulation factor VIII, delivering it to the site of injury, stabilizing its heterodimeric structure and protecting it from premature clearance from plasma. This Canis lupus familiaris (Dog) protein is von Willebrand factor (VWF).